Consider the following 274-residue polypeptide: Ommochrome-binding protein (274 aa).

Positions 1-18 (MKLLILTICALHVNQMMA) are cleaved as a signal peptide. Residue Asn-183 is glycosylated (N-linked (GlcNAc...) asparagine).

As to quaternary structure, monomer. Present in larval hemolymph and synthesized by the fat body.

Its function is as follows. Binds to an ommochrome, ommatin D which is a yellow chromophore. May be involved in guiding the chromophore through the hemolymph from the epidermis to the gut. The polypeptide is Ommochrome-binding protein (Manduca sexta (Tobacco hawkmoth)).